Reading from the N-terminus, the 487-residue chain is Histamine H1 receptor (487 aa).

Topologically, residues 1–29 (MSLPNSSCLLEDKMCEGNKTTMASPQLMP) are extracellular. N-linked (GlcNAc...) asparagine glycosylation is found at N5 and N18. A helical membrane pass occupies residues 30–50 (LVVVLSTICLVTVGLNLLVLY). Over 51 to 64 (AVRSERKLHTVGNL) the chain is Cytoplasmic. The chain crosses the membrane as a helical span at residues 65–89 (YIVSLSVADLIVGAVVMPMNILYLL). The Extracellular portion of the chain corresponds to 90 to 97 (MSKWSLGR). Residues 98–123 (PLCLFWLSMDYVASTASIFSVFILCI) form a helical membrane-spanning segment. C100 and C180 are disulfide-bonded. The histamine site is built by D107 and T112. The interval 107 to 112 (DYVAST) is important for agonist binding. The Cytoplasmic portion of the chain corresponds to 124-144 (DRYRSVQQPLRYLKYRTKTRA). Phosphothreonine occurs at positions 140 and 142. The helical transmembrane segment at 145–164 (SATILGAWFLSFLWVIPILG) threads the bilayer. Topologically, residues 165–188 (WNHFMQQTSVRREDKCETDFYDVT) are extracellular. Residues 189–211 (WFKVMTAIINFYLPTLLMLWFYA) form a helical membrane-spanning segment. Histamine is bound at residue N198. Over 212 to 416 (KIYKAVRQHC…MNRERKAAKQ (205 aa)) the chain is Cytoplasmic. S230 is subject to Phosphoserine. Positions 238–261 (KLRPENPKGDAKKPGKESPWEVLK) are enriched in basic and acidic residues. Positions 238-292 (KLRPENPKGDAKKPGKESPWEVLKRKPKDAGGGSVLKSPSQTXKEMKSPVVFSQE) are disordered. Position 279 is a phosphothreonine (T279). Phosphoserine occurs at positions 344 and 347. The segment at 345–379 (EISEDQMLGDSQSFSRTDSDTTTETAPGKGKLRSG) is disordered. The span at 353–369 (GDSQSFSRTDSDTTTET) shows a compositional bias: polar residues. Residues S380, S396, and S398 each carry the phosphoserine modification. Residues 417-440 (LGFIMAAFILCWIPYFIFFMVIAF) traverse the membrane as a helical segment. The interval 424–428 (FILCW) is important for agonist binding. Histamine is bound at residue Y431. C441 and C444 are disulfide-bonded. At 441–446 (CKNCCN) the chain is on the extracellular side. A helical transmembrane segment spans residues 447 to 469 (EHLHMFTIWLGYINSTLNPLIYP). Over 470–487 (LCNENFKKTFKRILHIRS) the chain is Cytoplasmic.

This sequence belongs to the G-protein coupled receptor 1 family. Post-translationally, phosphorylation at sites in the second and third cytoplasmic loops independently contribute to agonist-induced receptor down-regulation.

The protein resides in the cell membrane. Functionally, G-protein-coupled receptor for histamine, a biogenic amine that functions as an immune modulator and a neurotransmitter. Through the H1 receptor, histamine mediates the contraction of smooth muscles and increases capillary permeability due to contraction of terminal venules. Also mediates neurotransmission in the central nervous system and thereby regulates circadian rhythms, emotional and locomotor activities as well as cognitive functions. In Pan troglodytes (Chimpanzee), this protein is Histamine H1 receptor.